The primary structure comprises 358 residues: Src kinase-associated phosphoprotein 2 (358 aa).

Phosphoserine is present on residues serine 5 and serine 9. The interval 14–64 (PEEIRNLLADVETFVADTLKGENLSKKAKEKRESLIKKIKDVKSVYLQEFQ) is homodimerization. Tyrosine 75 bears the Phosphotyrosine mark. A phosphoserine mark is found at serine 87 and serine 90. One can recognise a PH domain in the interval 116–219 (FVIKAGYLEK…WVQQLKFILQ (104 aa)). Phosphotyrosine occurs at positions 151 and 197. A Phosphoserine modification is found at serine 223. The interval 232 to 292 (ERGELYDDVD…RDSVHHTSGD (61 aa)) is disordered. A compositionally biased stretch (acidic residues) spans 255-270 (IDDEIYEELPEEEEDT). Tyrosine 260 bears the Phosphotyrosine; by FYN mark. Phosphoserine is present on residues serine 272, serine 282, and serine 285. The span at 274 to 292 (KMDEQGKGSRDSVHHTSGD) shows a compositional bias: basic and acidic residues. The 62-residue stretch at 296–357 (DYANFYQGLW…PKAYLMEMYD (62 aa)) folds into the SH3 domain.

This sequence belongs to the SKAP family. Interacts with LAT, GRB2, PTK2B and PRAM1. Homodimer. Interacts with FYB1, which is required for SKAP2 protein stability. Interacts with PTPNS1. Part of a complex consisting of SKAP2, FYB1 and PTPNS1. Part of a complex consisting of SKAP2, FYB1 and PIRB. May interact with actin. May interact with FYN, HCK and LYN. Interacts with FASLG. In terms of processing, dephosphorylated on Tyr-75 by PTPN22. Phosphorylated by FYN on Tyr-260. In case of infection with Y.pseudotuberculosis, dephosphorylated by bacterial phosphatase yopH. In terms of tissue distribution, expressed in kidney, lung, liver, spleen, bone marrow and testis. Present in T-cells, B-cells, and all cells of the myelomonocytic lineage. Present in all brain regions, with highest levels in neurons from the Purkinje cell layer, hippocampal gyrus, cortex and substantia nigra (at protein level).

Its subcellular location is the cytoplasm. Its function is as follows. May be involved in B-cell and macrophage adhesion processes. In B-cells, may act by coupling the B-cell receptor (BCR) to integrin activation. May play a role in src signaling pathway. The chain is Src kinase-associated phosphoprotein 2 (Skap2) from Mus musculus (Mouse).